The primary structure comprises 401 residues: Cysteine desulfurase CsdA (401 aa).

N6-(pyridoxal phosphate)lysine is present on Lys222. Residue Cys358 is the Cysteine persulfide intermediate of the active site.

This sequence belongs to the class-V pyridoxal-phosphate-dependent aminotransferase family. Csd subfamily. In terms of assembly, homodimer. Forms a heterodimer with CsdE. Pyridoxal 5'-phosphate serves as cofactor.

The catalysed reaction is (sulfur carrier)-H + L-cysteine = (sulfur carrier)-SH + L-alanine. It catalyses the reaction L-selenocysteine + AH2 = hydrogenselenide + L-alanine + A + H(+). It carries out the reaction 3-sulfino-L-alanine + H2O = sulfite + L-alanine + H(+). With respect to regulation, cysteine desulfurase activity is increased 2-fold in the presence of CsdE. In terms of biological role, catalyzes the removal of elemental sulfur and selenium atoms from L-cysteine, L-cystine, L-selenocysteine, and L-selenocystine to produce L-alanine, and transiently retains the released sulfur atom on a cysteine residue, in the form of a persulfide. Can also desulfinate L-cysteine sulfinate (3-sulfino-L-alanine), which is the best substrate of the enzyme. Functions as a selenium delivery protein in the pathway for the biosynthesis of selenophosphate. Seems to participate in Fe/S biogenesis by recruiting the SufBCD-SufE proteins. Transfers sulfur to CsdE that increases the cysteine desulfurase activity of CsdA. Can also transfer sulfur directly to TcdA/CsdL in vitro. Appears to support the function of TcdA in the generation of cyclic threonylcarbamoyladenosine at position 37 (ct(6)A37) in tRNAs that read codons beginning with adenine. In Escherichia coli (strain K12), this protein is Cysteine desulfurase CsdA (csdA).